The primary structure comprises 213 residues: NADH-quinone oxidoreductase subunit I (213 aa).

2 consecutive 4Fe-4S ferredoxin-type domains span residues Arg-74–Ser-103 and Gly-113–Glu-142. The [4Fe-4S] cluster site is built by Cys-83, Cys-86, Cys-89, Cys-93, Cys-122, Cys-125, Cys-128, and Cys-132.

This sequence belongs to the complex I 23 kDa subunit family. As to quaternary structure, NDH-1 is composed of 14 different subunits. Subunits NuoA, H, J, K, L, M, N constitute the membrane sector of the complex. It depends on [4Fe-4S] cluster as a cofactor.

The protein resides in the cell inner membrane. It carries out the reaction a quinone + NADH + 5 H(+)(in) = a quinol + NAD(+) + 4 H(+)(out). Its function is as follows. NDH-1 shuttles electrons from NADH, via FMN and iron-sulfur (Fe-S) centers, to quinones in the respiratory chain. The immediate electron acceptor for the enzyme in this species is believed to be ubiquinone. Couples the redox reaction to proton translocation (for every two electrons transferred, four hydrogen ions are translocated across the cytoplasmic membrane), and thus conserves the redox energy in a proton gradient. This chain is NADH-quinone oxidoreductase subunit I, found in Campylobacter jejuni subsp. doylei (strain ATCC BAA-1458 / RM4099 / 269.97).